The sequence spans 639 residues: CTTNBP2 N-terminal-like protein (639 aa).

Residues 87 to 285 (MKQCKNMQER…DLEASHQHSS (199 aa)) adopt a coiled-coil conformation. Phosphoserine occurs at positions 284 and 285. 3 disordered regions span residues 387–430 (VENG…PCSS), 463–490 (RHKF…LSPT), and 511–609 (RFTS…AASL). Composition is skewed to low complexity over residues 407–430 (PSSG…PCSS) and 467–477 (QSQADQDQQAS). Phosphoserine occurs at positions 481, 488, 523, 527, 560, 563, and 568. Residues 511–529 (RFTSQQGPIKPVSPNSSPF) are compositionally biased toward polar residues. Residues T570 and T590 each carry the phosphothreonine modification. The segment covering 587–600 (PGLTPSPSATTPLT) has biased composition (low complexity). S592 carries the post-translational modification Phosphoserine.

In terms of assembly, interacts with CTTN/cortactin; this interaction may redistribute CTTN to stress fibers. May form homomers. Associates with the core of STRIPAK complexes composed of PP2A catalytic and scaffolding subunits, the striatins (PP2A regulatory subunits), the striatin-associated proteins MOB4, STRIP1 and STRIP2, PDCD10 and members of the STE20 kinases, such as STK24 and STK26.

It is found in the cell projection. Its subcellular location is the lamellipodium. It localises to the cytoplasm. The protein localises to the cytoskeleton. The protein resides in the stress fiber. Its function is as follows. Regulates lamellipodial actin dynamics in a CTTN-dependent manner. Associates with core striatin-interacting phosphatase and kinase (STRIPAK) complex to form CTTNBP2NL-STRIPAK complexes. STRIPAK complexes have critical roles in protein (de)phosphorylation and are regulators of multiple signaling pathways including Hippo, MAPK, nuclear receptor and cytoskeleton remodeling. Different types of STRIPAK complexes are involved in a variety of biological processes such as cell growth, differentiation, apoptosis, metabolism and immune regulation. The chain is CTTNBP2 N-terminal-like protein (CTTNBP2NL) from Pongo abelii (Sumatran orangutan).